Consider the following 219-residue polypeptide: Cytidylate kinase (219 aa).

10-18 (GPAAAGKST) is an ATP binding site.

The protein belongs to the cytidylate kinase family. Type 1 subfamily.

The protein localises to the cytoplasm. It carries out the reaction CMP + ATP = CDP + ADP. The catalysed reaction is dCMP + ATP = dCDP + ADP. This chain is Cytidylate kinase, found in Staphylococcus aureus (strain bovine RF122 / ET3-1).